We begin with the raw amino-acid sequence, 400 residues long: Keratin, type I cytoskeletal 19 (400 aa).

The segment at 1–79 (MTSYSYRQSS…TASDGLLAGN (79 aa)) is head. Arg7 carries the omega-N-methylarginine modification. A phosphoserine mark is found at Ser14 and Ser22. The residue at position 24 (Arg24) is an Asymmetric dimethylarginine; alternate. Residue Arg24 is modified to Omega-N-methylarginine; alternate. The residue at position 32 (Arg32) is an Omega-N-methylarginine. 2 positions are modified to phosphoserine: Ser35 and Ser40. Omega-N-methylarginine occurs at positions 43 and 51. Phosphoserine is present on residues Ser57 and Ser72. A coil 1A region spans residues 80–115 (EKLTMQNLNDRLASYLDKVRALEAANGELEVKIRDW). The IF rod domain maps to 80–391 (EKLTMQNLND…SLLEGQEDHY (312 aa)). Residues 116–133 (YQKQGPGPSRDYSHYYTT) form a linker 1 region. Positions 134 to 225 (IQDLRDKILG…KNHEEEISTL (92 aa)) are coil 1B. The linker 12 stretch occupies residues 226-248 (RGQVGGQVSVEVDSAPGTDLAKI). The necessary for interaction with PNN stretch occupies residues 244-390 (DLAKILSDMR…RSLLEGQEDH (147 aa)). Residues 249 to 387 (LSDMRSQYEV…ATYRSLLEGQ (139 aa)) form a coil 2 region. Thr323 carries the post-translational modification Phosphothreonine. Positions 388–400 (EDHYNNLSASKVL) are rod-like helical tail. Residue Tyr391 is modified to Phosphotyrosine. Ser395 and Ser397 each carry phosphoserine.

This sequence belongs to the intermediate filament family. As to quaternary structure, heterotetramer of two type I and two type II keratins. Interacts with PNN and the actin-binding domain of DMD. Interacts with HCV core protein. In terms of assembly, (Microbial infection) Interacts with hepatitis C virus/HCV core protein. As to expression, expressed in a defined zone of basal keratinocytes in the deep outer root sheath of hair follicles. Also observed in sweat gland and mammary gland ductal and secretory cells, bile ducts, gastrointestinal tract, bladder urothelium, oral epithelia, esophagus, ectocervical epithelium (at protein level). Expressed in epidermal basal cells, in nipple epidermis and a defined region of the hair follicle. Also seen in a subset of vascular wall cells in both the veins and artery of human umbilical cord, and in umbilical cord vascular smooth muscle. Observed in muscle fibers accumulating in the costameres of myoplasm at the sarcolemma in structures that contain dystrophin and spectrin.

Involved in the organization of myofibers. Together with KRT8, helps to link the contractile apparatus to dystrophin at the costameres of striated muscle. This Homo sapiens (Human) protein is Keratin, type I cytoskeletal 19 (KRT19).